Here is a 169-residue protein sequence, read N- to C-terminus: Sec-independent protein translocase protein TatB (169 aa).

A helical transmembrane segment spans residues 1–21; the sequence is MFDIGFLELAVIAVIGLIVIG. Positions 98-169 are disordered; it reads EAEEAKLQTP…TTKTEPANDR (72 aa). Over residues 134-143 the composition is skewed to basic and acidic residues; sequence PPEEPSKVEA. Residues 146-169 are compositionally biased toward polar residues; that stretch reads SAETPQANNQDQQPTTKTEPANDR.

It belongs to the TatB family. The Tat system comprises two distinct complexes: a TatABC complex, containing multiple copies of TatA, TatB and TatC subunits, and a separate TatA complex, containing only TatA subunits. Substrates initially bind to the TatABC complex, which probably triggers association of the separate TatA complex to form the active translocon.

Its subcellular location is the cell inner membrane. Its function is as follows. Part of the twin-arginine translocation (Tat) system that transports large folded proteins containing a characteristic twin-arginine motif in their signal peptide across membranes. Together with TatC, TatB is part of a receptor directly interacting with Tat signal peptides. TatB may form an oligomeric binding site that transiently accommodates folded Tat precursor proteins before their translocation. The protein is Sec-independent protein translocase protein TatB of Saccharophagus degradans (strain 2-40 / ATCC 43961 / DSM 17024).